We begin with the raw amino-acid sequence, 438 residues long: EF-hand calcium-binding domain-containing protein 3 (438 aa).

2 consecutive EF-hand domains span residues 47-82 (SQMR…LGMN) and 83-118 (LTKH…KNRF). Aspartate 96, aspartate 98, aspartate 100, lysine 102, and aspartate 107 together coordinate Ca(2+). Tyrosine 279 is modified (phosphotyrosine). A disordered region spans residues 413–438 (SSSDISECDTDTGRKRKRKGFKGFRQ). The segment covering 426–438 (RKRKRKGFKGFRQ) has biased composition (basic residues).

The sequence is that of EF-hand calcium-binding domain-containing protein 3 (EFCAB3) from Bos taurus (Bovine).